A 349-amino-acid polypeptide reads, in one-letter code: Phenylalanine--tRNA ligase alpha subunit (349 aa).

Glu258 lines the Mg(2+) pocket.

The protein belongs to the class-II aminoacyl-tRNA synthetase family. Phe-tRNA synthetase alpha subunit type 1 subfamily. In terms of assembly, tetramer of two alpha and two beta subunits. Mg(2+) serves as cofactor.

It localises to the cytoplasm. It catalyses the reaction tRNA(Phe) + L-phenylalanine + ATP = L-phenylalanyl-tRNA(Phe) + AMP + diphosphate + H(+). This chain is Phenylalanine--tRNA ligase alpha subunit, found in Rickettsia bellii (strain RML369-C).